The sequence spans 102 residues: RNA-binding protein Hfq (102 aa).

The Sm domain maps to 9-68 (DPFLNALRRERVPVSIYLVNGIKLQGQIESFDQFVILLKNTVSQMVYKHAISTVVPSRPV). Residues 63–102 (VPSRPVSHHSNNAGGGASNNYHHGSNVQGSTAQQDSEETE) are disordered. Residues 70 to 88 (HHSNNAGGGASNNYHHGSN) show a composition bias toward low complexity.

The protein belongs to the Hfq family. As to quaternary structure, homohexamer.

Its function is as follows. RNA chaperone that binds small regulatory RNA (sRNAs) and mRNAs to facilitate mRNA translational regulation in response to envelope stress, environmental stress and changes in metabolite concentrations. Also binds with high specificity to tRNAs. The chain is RNA-binding protein Hfq from Salmonella choleraesuis (strain SC-B67).